The sequence spans 1122 residues: Myelin transcription factor 1 (1122 aa).

2 disordered regions span residues 1–139 (MNVD…PAKA) and 208–334 (DAEE…SEMY). Over residues 86-100 (TEESEATLEEIEEDS) the composition is skewed to acidic residues. Composition is skewed to basic and acidic residues over residues 118-131 (SSDKVEPEETETKT) and 225-243 (TEPRDEVNCEDTEKLQKDM). A compositionally biased stretch (acidic residues) spans 244–273 (IDEEEEEEDDDVDEEDDDDLEEDEEEEEEH). 2 stretches are compositionally biased toward basic and acidic residues: residues 290 to 300 (PKPHCEGHFSP) and 310 to 322 (VRSDDDKDDDSHS). CCHHC-type zinc fingers lie at residues 394–437 (GRPE…PPEI) and 438–481 (LAMH…KLTR). Residues cysteine 403, cysteine 408, histidine 421, cysteine 427, cysteine 447, cysteine 452, histidine 465, and cysteine 471 each contribute to the Zn(2+) site. 3 disordered regions span residues 479–499 (LTRSHEKQQQPGDLSKSSSNS), 566–595 (SSETSPKAFKSKPFPKASSPCHSPSSSYIK), and 634–770 (NLST…YEDR). Residues 487–499 (QQPGDLSKSSSNS) are compositionally biased toward polar residues. Positions 570 to 595 (SPKAFKSKPFPKASSPCHSPSSSYIK) are enriched in low complexity. The span at 634–646 (NLSTKQQDTPSKS) shows a compositional bias: polar residues. The span at 670–689 (TFPSSSSCSSSPSMKSPDQS) shows a compositional bias: low complexity. The span at 690-711 (QRQNCTSATSSNMTSPHSSQTS) shows a compositional bias: polar residues. CCHHC-type zinc fingers lie at residues 788 to 831 (KDSK…LRNL), 832 to 875 (MAAH…GLKI), 881 to 924 (DKDD…QKEG), and 934 to 977 (KSLK…GKKG). Positions 797, 802, 815, 821, 841, 846, 859, 865, 890, 895, 908, 914, 943, 948, 961, and 967 each coordinate Zn(2+).

Belongs to the MYT1 family.

The protein resides in the nucleus. In terms of biological role, transcriptional activator which is essential for neuronal differentiation. Can promote ectotopic neuronal differentiation and confers insensitivity to lateral inhibition, but only in cooperation with bHLH transcription factors. This is Myelin transcription factor 1 (myt1) from Xenopus laevis (African clawed frog).